The chain runs to 563 residues: Membrane protein insertase YidC (563 aa).

The helical transmembrane segment at 6–26 (TVLWMIFSFSLLLLWNNWQIH) threads the bilayer. The tract at residues 36 to 70 (PAPEAAATQQPKADANGTAASSTASIPSSPAAAPA) is disordered. Over residues 54–70 (AASSTASIPSSPAAAPA) the composition is skewed to low complexity. 4 helical membrane-spanning segments follow: residues 373–393 (WGWT…PLAA), 443–463 (LPMV…LASV), 482–502 (PFFI…KLNP), and 512–532 (VMMI…AGLV).

Belongs to the OXA1/ALB3/YidC family. Type 1 subfamily. As to quaternary structure, interacts with the Sec translocase complex via SecD. Specifically interacts with transmembrane segments of nascent integral membrane proteins during membrane integration.

Its subcellular location is the cell inner membrane. In terms of biological role, required for the insertion and/or proper folding and/or complex formation of integral membrane proteins into the membrane. Involved in integration of membrane proteins that insert both dependently and independently of the Sec translocase complex, as well as at least some lipoproteins. Aids folding of multispanning membrane proteins. This Bordetella parapertussis (strain 12822 / ATCC BAA-587 / NCTC 13253) protein is Membrane protein insertase YidC.